The primary structure comprises 113 residues: Hydrogenase maturation factor HybF (113 aa).

Histidine 2 and glutamate 3 together coordinate Ni(2+). Residues cysteine 73, cysteine 76, cysteine 89, and cysteine 92 each contribute to the Zn(2+) site.

It belongs to the HypA/HybF family. HybF subfamily. Monomer.

In terms of biological role, involved in the maturation of [NiFe] hydrogenases. Required for nickel insertion into the metal center of the hydrogenase. HybF is involved in maturation of hydrogenases 1 and 2. It may partially substitute for the function of HypA and vice versa. This Escherichia coli (strain K12) protein is Hydrogenase maturation factor HybF.